The chain runs to 953 residues: Atromentin synthetase invA2 (953 aa).

An adenylation (A) domain region spans residues 38–460; sequence RAVSQYPNHE…SGRIKDTVIV (423 aa). Residues 592–670 enclose the Carrier domain; the sequence is APSTETEKTL…SLAKYVDSLI (79 aa). The thiolation and peptide carrier (T) domain stretch occupies residues 597-667; the sequence is TEKTLAGIYA…VISSLAKYVD (71 aa). The residue at position 629 (S629) is an O-(pantetheine 4'-phosphoryl)serine. Residues 693–795 are thioesterase (TE) domain; sequence PIFMVHPGVG…FTGLINIPPH (103 aa).

This sequence belongs to the ATP-dependent AMP-binding enzyme family.

The protein operates within secondary metabolite biosynthesis. Its function is as follows. An L-tyrosine:2-oxoglutarate aminotransferase (probably invD) and atromentin synthetase invA2 catalyze consecutive steps to turn over L-tyrosine into atromentin, which represents the generic precursor molecule for the entire terphenylquinone and pulvinic acid family of pigments, which are widely distributed secondary metabolites in homobasidiomycetes. The first step catalyzed by the aminotransferase converts L-tyrosine in to 4-hydroxyphenylpyruvate (4-HPP). Adenylation of two 4-HPP monomers by the invA2 adenylation (A) domain, covalent tethering of the monomers as a thioester and oxoester onto the invA2 thiolation (T) and thioesterase (TE) domains, respectively, and symmetric C-C-bond formation between two monomers catalyzed by the invA2 TE domain leads to atromentin. In Paxillus involutus (Naked brimcap), this protein is Atromentin synthetase invA2 (invA2).